The sequence spans 341 residues: L-threonine 3-dehydrogenase (341 aa).

Cys38 serves as a coordination point for Zn(2+). Catalysis depends on charge relay system residues Thr40 and His43. Zn(2+) is bound by residues His63, Glu64, Cys93, Cys96, Cys99, and Cys107. Residues Ile175, Asp195, Arg200, 262–264, and 286–287 each bind NAD(+); these read LGI and IY.

The protein belongs to the zinc-containing alcohol dehydrogenase family. In terms of assembly, homotetramer. Requires Zn(2+) as cofactor.

It is found in the cytoplasm. It carries out the reaction L-threonine + NAD(+) = (2S)-2-amino-3-oxobutanoate + NADH + H(+). Its pathway is amino-acid degradation; L-threonine degradation via oxydo-reductase pathway; glycine from L-threonine: step 1/2. Its function is as follows. Catalyzes the NAD(+)-dependent oxidation of L-threonine to 2-amino-3-ketobutyrate. The protein is L-threonine 3-dehydrogenase of Shigella boydii serotype 4 (strain Sb227).